A 256-amino-acid chain; its full sequence is tRNA pseudouridine synthase A (256 aa).

Asp55 serves as the catalytic Nucleophile. Tyr113 is a binding site for substrate.

The protein belongs to the tRNA pseudouridine synthase TruA family. In terms of assembly, homodimer.

It catalyses the reaction uridine(38/39/40) in tRNA = pseudouridine(38/39/40) in tRNA. In terms of biological role, formation of pseudouridine at positions 38, 39 and 40 in the anticodon stem and loop of transfer RNAs. This Limosilactobacillus reuteri (strain DSM 20016) (Lactobacillus reuteri) protein is tRNA pseudouridine synthase A.